A 418-amino-acid polypeptide reads, in one-letter code: MSGSTLLKETGPREVFCGLTSIVWLHRRMPDAFFLVVGSRTCAHLIQSAAGVMIFAEPRFGTAILEERDLAGLADAHEELDRVVKSLLKRRPEIRTLFLVGSCPSEVIKIDLSRAAERLSSQFNGQVRILNYSGSGIETTFTQGEDGALKALVPLMPSSQEEQLLLAGTLANPVEDRLKTIFNRLGIQKVESFPPRESTKLPAIGPGTKVLLAQPYLTDTARELKDRGAEILQAPFPLGVEGSQLWIEAAANAFKIKKTLVDATLEPLITRAHKALKPYVEQLSGKKLFLLPESQLEIPLARFLSNECGMKLIEVGVPYLNREMMGPELDLLPQNTRIVEGQHVEKQLDRVREHHPDLVVCGMGLANPLEAEGISTKWSIEMVFSPIHGIDQASDLAELFARPLHRQNLLNKKTLEAV.

Residues Cys-17, Cys-42, and Cys-103 each coordinate [4Fe-4S] cluster.

Belongs to the BchN/ChlN family. Protochlorophyllide reductase is composed of three subunits; ChlL, ChlN and ChlB. Forms a heterotetramer of two ChlB and two ChlN subunits. [4Fe-4S] cluster serves as cofactor.

It carries out the reaction chlorophyllide a + oxidized 2[4Fe-4S]-[ferredoxin] + 2 ADP + 2 phosphate = protochlorophyllide a + reduced 2[4Fe-4S]-[ferredoxin] + 2 ATP + 2 H2O. It participates in porphyrin-containing compound metabolism; chlorophyll biosynthesis (light-independent). Its function is as follows. Component of the dark-operative protochlorophyllide reductase (DPOR) that uses Mg-ATP and reduced ferredoxin to reduce ring D of protochlorophyllide (Pchlide) to form chlorophyllide a (Chlide). This reaction is light-independent. The NB-protein (ChlN-ChlB) is the catalytic component of the complex. The protein is Light-independent protochlorophyllide reductase subunit N of Prochlorococcus marinus (strain SARG / CCMP1375 / SS120).